Here is a 562-residue protein sequence, read N- to C-terminus: MNQKQVIAERLAAILPSLEVEAIYNLLEKPKSSEMGDIAFPAFSLAKVERKAPQAIAADIVEKLDTTGFENVVATGPYVNFFLDKAAISHQVLTDVITEKDQYGKLNIGQGRNVTIDMSSPNIAKPFSVGHLRSTVIGDALANIHEKLGYKPIRINHLGDWGKQFGMLIVAYKLWGDKAAVEADPISELLKLYVRINAEAEEKPELDDEARQWFKKLEDGDPEAHELWQWFRDESLVEFNRIYDKLDVTFDSYNGEAFYNDKMDEGIQILEEKGLLQESKGAKIVDLESYNLPPALIMKTDGATLYITRDMATAMYRKRTYDFVKSIYVVGQEQINHFKQLKAVLKEMDFDWSDDMTHITFGLVTKDKKKLSTRKGNIILLEPTLDEAISRALTQIEAKNPDLENKEEVAHAVGVGAVKFYDLKTDRDNGYDFDLEAMVSFEGETGPYVQYAYARIQSILRKANFVPNAENDYKLADTESWEIIKHIQNFSAVVERAGDKFDPSLIAKYAINLAQAFNKYYAHTRILDESPERDSRLALAYATGLVLKEALRLLGVKAPEKM.

The short motif at 121-131 (PNIAKPFSVGH) is the 'HIGH' region element.

This sequence belongs to the class-I aminoacyl-tRNA synthetase family. In terms of assembly, monomer.

Its subcellular location is the cytoplasm. The catalysed reaction is tRNA(Arg) + L-arginine + ATP = L-arginyl-tRNA(Arg) + AMP + diphosphate. The chain is Arginine--tRNA ligase from Streptococcus suis (strain 98HAH33).